Reading from the N-terminus, the 277-residue chain is Putative phosphoenolpyruvate synthase regulatory protein (277 aa).

157–164 (GVSRSGKT) serves as a coordination point for ADP.

Belongs to the pyruvate, phosphate/water dikinase regulatory protein family. PSRP subfamily.

It catalyses the reaction [pyruvate, water dikinase] + ADP = [pyruvate, water dikinase]-phosphate + AMP + H(+). The catalysed reaction is [pyruvate, water dikinase]-phosphate + phosphate + H(+) = [pyruvate, water dikinase] + diphosphate. Functionally, bifunctional serine/threonine kinase and phosphorylase involved in the regulation of the phosphoenolpyruvate synthase (PEPS) by catalyzing its phosphorylation/dephosphorylation. The chain is Putative phosphoenolpyruvate synthase regulatory protein from Azoarcus sp. (strain BH72).